The primary structure comprises 1211 residues: Diacylglycerol kinase 1 (1211 aa).

A disordered region spans residues 174 to 244 (HHSLGGHLSH…RNSSKKSSNS (71 aa)). Positions 197–230 (VTPSPLASGPSMFQASNPARRSVDSSPSHSATNH) are enriched in polar residues. Residues 231–244 (SQMSRNSSKKSSNS) show a composition bias toward low complexity. 2 consecutive EF-hand domains span residues 286-321 (RPEDKLEFMFRLYDTDSNGVLDTAEMDAIVNQMMAV) and 331-366 (ELRPILQEMMVEIDYDADGTVSLDEWQRGGMTTIPL). Residues Asp299, Asp301, Asn303, Glu310, Asp344, Asp346, Asp348, Thr350, and Glu355 each coordinate Ca(2+). 2 Phorbol-ester/DAG-type zinc fingers span residues 382-432 (IHVW…PASC) and 449-498 (LHHW…KKEC). Positions 548–682 (ELSCPLLVFV…LDRWSIEVTN (135 aa)) constitute a DAGKc domain. 3 disordered regions span residues 789–841 (TLRT…ETEK), 874–893 (AATATPVGSNQSDNSSQRNK), and 910–958 (DHED…QQQQ). Positions 795–805 (SSSSSNTSSGS) are enriched in low complexity. Over residues 826–841 (DVREKSVPRRSGETEK) the composition is skewed to basic and acidic residues. Over residues 879–893 (PVGSNQSDNSSQRNK) the composition is skewed to polar residues. The segment covering 931–958 (NSIPATPATPITPTTPNAASSVLQQQQQ) has biased composition (low complexity).

The protein belongs to the eukaryotic diacylglycerol kinase family. In terms of tissue distribution, in 10-11 hours embryos, expression is abundant in a limited number of cells in the procephalic region and in the ventral nerve cord. Predominantly expressed in the adult nervous system and muscle: including compound eyes, brain cortex, fibrillar muscle, and tubular muscle.

The enzyme catalyses a 1,2-diacyl-sn-glycerol + ATP = a 1,2-diacyl-sn-glycero-3-phosphate + ADP + H(+). In terms of biological role, upon cell stimulation converts the second messenger diacylglycerol into phosphatidate, initiating the resynthesis of phosphatidylinositols and attenuating protein kinase C activity. May have a role in the development of the embryonic nervous system and the function of the adult nervous system and muscle; regulating signal transduction in neurons. In Drosophila melanogaster (Fruit fly), this protein is Diacylglycerol kinase 1 (Dgk).